The primary structure comprises 346 residues: uncharacterized protein (346 aa).

It belongs to the Gfo/Idh/MocA family.

This is an uncharacterized protein from Escherichia coli (strain K12).